We begin with the raw amino-acid sequence, 156 residues long: Small ribosomal subunit protein uS7 (156 aa).

This sequence belongs to the universal ribosomal protein uS7 family. In terms of assembly, part of the 30S ribosomal subunit. Contacts proteins S9 and S11.

One of the primary rRNA binding proteins, it binds directly to 16S rRNA where it nucleates assembly of the head domain of the 30S subunit. Is located at the subunit interface close to the decoding center, probably blocks exit of the E-site tRNA. This chain is Small ribosomal subunit protein uS7, found in Oleidesulfovibrio alaskensis (strain ATCC BAA-1058 / DSM 17464 / G20) (Desulfovibrio alaskensis).